Consider the following 167-residue polypeptide: MHTPKHAIRRMSKGEMEFFEGRCQRMGEAKRTMWGTKWCGSGNEAINYTDLGYFSNLDSCCRTHDHCDSIPAGETKYGLTNEGKYTMMNCKCESAFEKCLRDVRGILEGKAAAAVRKTYFDLYGNGCFNVKCPSGARSARSEECTNGMATYTGETGYGAWAINKLNG.

Ca(2+)-binding residues include Trp38, Gly40, and Gly42. 5 disulfide bridges follow: Cys39–Cys61, Cys60–Cys99, Cys67–Cys92, Cys90–Cys127, and Cys132–Cys144. The N-linked (GlcNAc...) asparagine glycan is linked to Asn47. His64 is a catalytic residue. Residue Asp65 coordinates Ca(2+). The propeptide occupies 136–140 (ARSAR).

It belongs to the phospholipase A2 family. Group III subfamily. In terms of assembly, heterodimer composed of a large subunit and a small subunit; disulfide-linked. Requires Ca(2+) as cofactor. In terms of tissue distribution, expressed by the venom gland.

The protein localises to the secreted. The catalysed reaction is a 1,2-diacyl-sn-glycero-3-phosphocholine + H2O = a 1-acyl-sn-glycero-3-phosphocholine + a fatty acid + H(+). Phospholipase toxin, which catalyzes the calcium-dependent hydrolysis of the 2-acyl groups in 3-sn-phosphoglycerides. Inhibits both skeletal (RYR1) and cardiac (RYR2) ryanodine receptors (calcium release channels). Probably blocks ryanodine receptors by generating a lipid product. Shows hemolytic activity, but it is not know if it is direct or indirect. This Hottentotta tamulus (Eastern Indian scorpion) protein is Phospholipase A2.